The primary structure comprises 296 residues: Phosphate transport system permease protein PstA (296 aa).

Residues 1–28 (MAMVEMQTTAALAESRRKMQARRRLKNR) are Cytoplasmic-facing. Residues 29 to 50 (IALTLSMATMAFGLFWLIWILM) traverse the membrane as a helical segment. Over 51–82 (STITRGIDGMSLALFTEMTPPPNTEGGGLANA) the chain is Periplasmic. Residues 83–102 (LAGSGLLILWATVFGTPLGI) form a helical membrane-spanning segment. One can recognise an ABC transmembrane type-1 domain in the interval 83–286 (LAGSGLLILW…LCVLLLNILA (204 aa)). Residues 103–126 (MAGIYLAEYGRKSWLAEVIRFIND) lie on the Cytoplasmic side of the membrane. Residues 127–146 (ILLSAPSIVVGLFVYTIVVA) traverse the membrane as a helical segment. Residues 147–150 (QMEH) lie on the Periplasmic side of the membrane. A helical transmembrane segment spans residues 151–169 (FSGWAGVIALALLQVPIVI). Residues 170-204 (RTTENMLKLVPYSLREAAYALGTPKWKMISAITLK) are Cytoplasmic-facing. A helical membrane pass occupies residues 205-223 (ASVSGIMTGILLAIARIAG). Over 224 to 266 (ETAPLLFTALSNQFWSTDMMQPIANLPVTIFKFAMSPFAEWQQ) the chain is Periplasmic. The helical transmembrane segment at 267–286 (LAWAGVLIITLCVLLLNILA) threads the bilayer. The Cytoplasmic segment spans residues 287 to 296 (RVVFAKNKHG).

The protein belongs to the binding-protein-dependent transport system permease family. CysTW subfamily.

The protein localises to the cell inner membrane. Functionally, part of the binding-protein-dependent transport system for phosphate; probably responsible for the translocation of the substrate across the membrane. The polypeptide is Phosphate transport system permease protein PstA (pstA) (Escherichia coli (strain K12)).